Reading from the N-terminus, the 272-residue chain is Shikimate dehydrogenase (NADP(+)) (272 aa).

Residues 14–16 (SKS) and Thr61 contribute to the shikimate site. Catalysis depends on Lys65, which acts as the Proton acceptor. Glu77 is a binding site for NADP(+). Positions 86 and 102 each coordinate shikimate. NADP(+) contacts are provided by residues 126–130 (GAGGA), 149–154 (NRTASR), and Met213. Shikimate is bound at residue Tyr215. Gly237 is a binding site for NADP(+).

It belongs to the shikimate dehydrogenase family. In terms of assembly, homodimer.

The catalysed reaction is shikimate + NADP(+) = 3-dehydroshikimate + NADPH + H(+). Its pathway is metabolic intermediate biosynthesis; chorismate biosynthesis; chorismate from D-erythrose 4-phosphate and phosphoenolpyruvate: step 4/7. Its function is as follows. Involved in the biosynthesis of the chorismate, which leads to the biosynthesis of aromatic amino acids. Catalyzes the reversible NADPH linked reduction of 3-dehydroshikimate (DHSA) to yield shikimate (SA). The polypeptide is Shikimate dehydrogenase (NADP(+)) (Salmonella choleraesuis (strain SC-B67)).